The chain runs to 484 residues: Allantoinase, mitochondrial (484 aa).

The Zn(2+) site is built by histidine 76, histidine 78, lysine 163, histidine 199, histidine 251, and aspartate 324. Residue lysine 163 is modified to N6-carboxylysine.

Belongs to the metallo-dependent hydrolases superfamily. Allantoinase family. Homotetramer. Requires Zn(2+) as cofactor. Post-translationally, carboxylation allows a single lysine to coordinate two zinc ions. In terms of tissue distribution, liver and kidney.

It is found in the mitochondrion. The catalysed reaction is (S)-allantoin + H2O = allantoate + H(+). The protein operates within nitrogen metabolism; (S)-allantoin degradation; allantoate from (S)-allantoin: step 1/1. This chain is Allantoinase, mitochondrial (ALN), found in Aquarana catesbeiana (American bullfrog).